Consider the following 177-residue polypeptide: Thymidine kinase (177 aa).

Residue Gly-11 to Ser-18 coordinates ATP. The active-site Proton acceptor is Glu-83. Residue Phe-113 participates in substrate binding. Zn(2+) contacts are provided by Cys-138 and Cys-141. Residue Ile-157–Gly-161 participates in substrate binding. Positions 170 and 173 each coordinate Zn(2+).

It belongs to the thymidine kinase family. In terms of assembly, homotetramer. Two molecules of substrate bind to each enzyme tetramer.

It carries out the reaction thymidine + ATP = dTMP + ADP + H(+). Phosphorylates thymidine and thymidine analogs, such as azidothymidine (AZT). Part of the salvage pathway for pyrimidine deoxyribonucleotide synthesis. In Cynomys gunnisoni (Gunnison's prairie dog), this protein is Thymidine kinase (OPG101).